The following is a 344-amino-acid chain: 4-dimethylallyltryptophan N-methyltransferase easF (344 aa).

The protein belongs to the methyltransferase superfamily. As to quaternary structure, homodimer.

The enzyme catalyses 4-(3-methylbut-2-enyl)-L-tryptophan + S-adenosyl-L-methionine = 4-(3-methylbut-2-enyl)-L-abrine + S-adenosyl-L-homocysteine + H(+). The protein operates within alkaloid biosynthesis; ergot alkaloid biosynthesis. Functionally, 4-dimethylallyltryptophan N-methyltransferase; part of the gene cluster that mediates the biosynthesis of fungal ergot alkaloid. DmaW catalyzes the first step of ergot alkaloid biosynthesis by condensing dimethylallyl diphosphate (DMAP) and tryptophan to form 4-dimethylallyl-L-tryptophan. The second step is catalyzed by the methyltransferase easF that methylates 4-dimethylallyl-L-tryptophan in the presence of S-adenosyl-L-methionine, resulting in the formation of 4-dimethylallyl-L-abrine. The catalase easC and the FAD-dependent oxidoreductase easE then transform 4-dimethylallyl-L-abrine to chanoclavine-I which is further oxidized by easD in the presence of NAD(+), resulting in the formation of chanoclavine-I aldehyde. Agroclavine dehydrogenase easG then mediates the conversion of chanoclavine-I aldehyde to agroclavine via a non-enzymatic adduct reaction: the substrate is an iminium intermediate that is formed spontaneously from chanoclavine-I aldehyde in the presence of glutathione. The presence of easA is not required to complete this reaction. Further conversion of agroclavine to paspalic acid is a two-step process involving oxidation of agroclavine to elymoclavine and of elymoclavine to paspalic acid, the second step being performed by the elymoclavine oxidase cloA. Paspalic acid is then further converted to D-lysergic acid. Ergopeptines are assembled from D-lysergic acid and three different amino acids by the D-lysergyl-peptide-synthetases composed each of a monomudular and a trimodular nonribosomal peptide synthetase subunit. LpsB and lpsC encode the monomodular subunits responsible for D-lysergic acid activation and incorporation into the ergopeptine backbone. LpsA1 and A2 subunits encode the trimodular nonribosomal peptide synthetase assembling the tripeptide portion of ergopeptines. LpsA1 is responsible for formation of the major ergopeptine, ergotamine, and lpsA2 for alpha-ergocryptine, the minor ergopeptine of the total alkaloid mixture elaborated by C.purpurea. D-lysergyl-tripeptides are assembled by the nonribosomal peptide synthetases and released as N-(D-lysergyl-aminoacyl)-lactams. Cyclolization of the D-lysergyl-tripeptides is performed by the Fe(2+)/2-ketoglutarate-dependent dioxygenase easH which introduces a hydroxyl group into N-(D-lysergyl-aminoacyl)-lactam at alpha-C of the aminoacyl residue followed by spontaneous condensation with the terminal lactam carbonyl group. The sequence is that of 4-dimethylallyltryptophan N-methyltransferase easF from Claviceps purpurea (Ergot fungus).